Reading from the N-terminus, the 309-residue chain is Curved DNA-binding protein (309 aa).

Residues 5-69 (DYYAILGVKP…ERRAEYDQLR (65 aa)) enclose the J domain.

It is found in the cytoplasm. Its subcellular location is the nucleoid. In terms of biological role, DNA-binding protein that preferentially recognizes a curved DNA sequence. It is probably a functional analog of DnaJ; displays overlapping activities with DnaJ, but functions under different conditions, probably acting as a molecular chaperone in an adaptive response to environmental stresses other than heat shock. Lacks autonomous chaperone activity; binds native substrates and targets them for recognition by DnaK. Its activity is inhibited by the binding of CbpM. The sequence is that of Curved DNA-binding protein from Serratia proteamaculans (strain 568).